Consider the following 382-residue polypeptide: Beta-1,4-galactosyltransferase 6 (382 aa).

The Cytoplasmic segment spans residues 1 to 14; sequence MSVLRRMMRVSNRS. A helical; Signal-anchor for type II membrane protein membrane pass occupies residues 15-35; it reads LLAFIFFFSLSSSCLYFIYVA. Over 36 to 382 the chain is Lumenal; the sequence is PGIANTYLFM…MPELAPIEDY (347 aa). N-linked (GlcNAc...) asparagine glycans are attached at residues N71, N75, N83, N84, N99, and N122. C108 and C152 are oxidised to a cystine. Residues 163 to 167, 202 to 204, 229 to 230, Y258, and W290 contribute to the UDP-alpha-D-galactose site; these read PFRNR, FNR, and VD. C223 and C242 are joined by a disulfide. D230 is a Mn(2+) binding site. 292–295 serves as a coordination point for N-acetyl-D-glucosamine; it reads GEDD. N307 carries an N-linked (GlcNAc...) asparagine glycan. Residue H323 participates in Mn(2+) binding. UDP-alpha-D-galactose is bound at residue 323–324; that stretch reads HH. R334 lines the N-acetyl-D-glucosamine pocket. N-linked (GlcNAc...) asparagine glycosylation occurs at N367.

Belongs to the glycosyltransferase 7 family. The cofactor is Mn(2+). Requires Mg(2+) as cofactor. High expression in brain and adrenal gland, lower in liver, lung, colon and peripheral white blood cells.

The protein resides in the golgi apparatus. It localises to the golgi stack membrane. The enzyme catalyses a beta-D-glucosyl-(1&lt;-&gt;1')-N-acylsphing-4-enine + UDP-alpha-D-galactose = a beta-D-Gal-(1-&gt;4)-beta-D-Glc-(1&lt;-&gt;1)-Cer(d18:1(4E)) + UDP + H(+). It participates in protein modification; protein glycosylation. The protein operates within sphingolipid metabolism. With respect to regulation, inhibited by EDTA. Its function is as follows. Catalyzes the synthesis of lactosylceramide (LacCer) via the transfer of galactose from UDP-galactose to glucosylceramide (GlcCer). LacCer is the starting point in the biosynthesis of all gangliosides (membrane-bound glycosphingolipids) which play pivotal roles in the CNS including neuronal maturation and axonal and myelin formation. The sequence is that of Beta-1,4-galactosyltransferase 6 from Homo sapiens (Human).